The primary structure comprises 572 residues: Sulfate adenylyltransferase (572 aa).

An N-terminal region spans residues 1–169 (MANTPHGGVL…IQAINKLNHY (169 aa)). The catalytic stretch occupies residues 170-394 (DYVGLRYTPA…LRESHPPRAK (225 aa)). Q197 is a binding site for sulfate. Residues 197–200 (QTRN) and 291–294 (GRDH) each bind ATP. Residues T198, R199, and N200 contribute to the active site. R199 is a binding site for sulfate. Residue A295 participates in sulfate binding. M333 lines the ATP pocket. An allosteric regulation domain; adenylyl-sulfate kinase-like region spans residues 395 to 572 (QGFTIFLTGH…LLESQGFFGN (178 aa)). 3'-phosphoadenylyl sulfate contacts are provided by residues 434–437 (ETVR), R451, 477–478 (IA), and K515.

The protein in the N-terminal section; belongs to the sulfate adenylyltransferase family. It in the C-terminal section; belongs to the APS kinase family. Homohexamer. Dimer of trimers.

The protein resides in the cytoplasm. It carries out the reaction sulfate + ATP + H(+) = adenosine 5'-phosphosulfate + diphosphate. Its pathway is sulfur metabolism; hydrogen sulfide biosynthesis; sulfite from sulfate: step 1/3. Its activity is regulated as follows. Allosterically inhibited by 3'-phosphoadenosine 5'-phosphosulfate (PAPS). Functionally, catalyzes the first intracellular reaction of sulfate assimilation, forming adenosine-5'-phosphosulfate (APS) from inorganic sulfate and ATP. Plays an important role in sulfate activation as a component of the biosynthesis pathway of sulfur-containing amino acids. In Yarrowia lipolytica (strain CLIB 122 / E 150) (Yeast), this protein is Sulfate adenylyltransferase.